A 137-amino-acid polypeptide reads, in one-letter code: SPbeta prophage-derived disulfide bond formation protein A (137 aa).

The signal sequence occupies residues 1-25 (MKKWIVLFLVLIAAAISIFVYVSTG). The region spanning 26–136 (SEKPFYNDIN…IEKFFDKNGD (111 aa)) is the Thioredoxin domain. The cysteines at positions 58 and 61 are disulfide-linked.

Belongs to the thioredoxin family.

Its subcellular location is the secreted. Its function is as follows. Unknown; dispensable for production of the lantibiotic sublancin 168 and for competence for DNA uptake. This chain is SPbeta prophage-derived disulfide bond formation protein A (bdbA), found in Bacillus subtilis (strain 168).